The following is a 630-amino-acid chain: MVNWQTLFMVSLRRQGSSSRYRYKFNMENITHQVFPRCKQAFKKTNLSYEYCDLEGVLYNISLTDLQKLLLRDINAPREHAFKIVRTDLTQKSSKKRIQHWERIAPMFDHPLSLYEKLFSEMDEDFKPSFEWQQLIRVRCKDDKLKLQRVIWPKSIFSNFCRGIGVKKSTYDRLLEQNNGEVPMFVNPANAKPLPLFQVSDEAMIGEFDGIGIFPYFVDKHREFFVTEVDKLKTKIASPLCTLNERKRIEKANAGRILANEEGKPFYLDANSATTRIAGGNVVTLKQLLERSVSHKTLWSKQSNKDRTCPGDILRATILSNDFSIRQLRAEFCKNFILYNIFTILQRNKKSIRSFSGNDNAPSFQFSWNVWDSYIWKQYQETESMKIPTDQASLINYKTKYDSFLHDLQTYSALVISEMKWNQFSIFQNDETTLSRFEHITLILQTVLTKSKMIRIFQPNLYKFMQDDLRPTLMELVGFTESINATIEPGFANEQSLQSANGLKKLANQLLYFEQEIYGEKFRVNRPIQLRPITLSANYKIVILDKKNAIPEIFQTLLKFMTQITTYFVKDLSEVELHGHMHCIDKKMLDKSKFMYLYEEKSNEEVKAASPQKEKIVDNIIGLLSNDEEH.

The protein resides in the mitochondrion. Appears to be specifically required for the splicing of the terminal intron (bI5) of the cytochrome b pre-mRNA. Can also stimulates the splicing of the omega intron of the precursor of large ribosomal RNA. This is Cytochrome B pre-mRNA-processing protein 2 (CBP2) from Saccharomyces cerevisiae (strain ATCC 204508 / S288c) (Baker's yeast).